Reading from the N-terminus, the 597-residue chain is Aspartate--tRNA ligase (597 aa).

Glu180 serves as a coordination point for L-aspartate. An aspartate region spans residues 204-207; the sequence is QLFK. Arg226 contacts L-aspartate. ATP-binding positions include 226–228 and Gln235; that span reads RDE. An L-aspartate-binding site is contributed by His454. Position 488 (Glu488) interacts with ATP. Arg495 contributes to the L-aspartate binding site. 540 to 543 contributes to the ATP binding site; sequence GLDR.

This sequence belongs to the class-II aminoacyl-tRNA synthetase family. Type 1 subfamily. Homodimer.

The protein localises to the cytoplasm. It catalyses the reaction tRNA(Asp) + L-aspartate + ATP = L-aspartyl-tRNA(Asp) + AMP + diphosphate. Functionally, catalyzes the attachment of L-aspartate to tRNA(Asp) in a two-step reaction: L-aspartate is first activated by ATP to form Asp-AMP and then transferred to the acceptor end of tRNA(Asp). The protein is Aspartate--tRNA ligase of Clostridium perfringens (strain ATCC 13124 / DSM 756 / JCM 1290 / NCIMB 6125 / NCTC 8237 / Type A).